The following is a 159-amino-acid chain: 6,7-dimethyl-8-ribityllumazine synthase (159 aa).

Residues tyrosine 23, 58 to 60, and 82 to 84 each bind 5-amino-6-(D-ribitylamino)uracil; these read AYE and TII. The Proton donor role is filled by histidine 90. Isoleucine 115 serves as a coordination point for 5-amino-6-(D-ribitylamino)uracil. A (2S)-2-hydroxy-3-oxobutyl phosphate-binding site is contributed by arginine 129.

Belongs to the DMRL synthase family. As to quaternary structure, forms an icosahedral capsid composed of 60 subunits, arranged as a dodecamer of pentamers.

It catalyses the reaction (2S)-2-hydroxy-3-oxobutyl phosphate + 5-amino-6-(D-ribitylamino)uracil = 6,7-dimethyl-8-(1-D-ribityl)lumazine + phosphate + 2 H2O + H(+). Its pathway is cofactor biosynthesis; riboflavin biosynthesis; riboflavin from 2-hydroxy-3-oxobutyl phosphate and 5-amino-6-(D-ribitylamino)uracil: step 1/2. Its function is as follows. Catalyzes the formation of 6,7-dimethyl-8-ribityllumazine by condensation of 5-amino-6-(D-ribitylamino)uracil with 3,4-dihydroxy-2-butanone 4-phosphate. This is the penultimate step in the biosynthesis of riboflavin. This Buchnera aphidicola subsp. Baizongia pistaciae (strain Bp) protein is 6,7-dimethyl-8-ribityllumazine synthase.